Here is a 1365-residue protein sequence, read N- to C-terminus: MEVLMAKGANLVFHNKVIDGIAMKRLISRFIDHFGMAYTSHILDQVKTLGFQQATATSISLGIDDLLTIPSKGWLVQDAEQQSFILEKQHHYGNIHAVEKLRQSIEIWYATSEHLRQEMNPNFRMTDPYNPVHMMSFSGARGNASQVHQLVGMRGLMSDPQGQMIDLPIQSNLREGLSLTEYIISCYGARKGVVDTAVRTSDAGYLTRRLVEVVQHVVVRRRDCGTTRGISVSPQTGTIPEILFIQTLIGRVLADDIYKGPRCIAARNQDIGVGLVNRLITFRVQTISIRTPFTCRSTSWICRLCYGRSPTHGDLVELGEAVGIIAGQSIGEPGTQLTLRTFHTGGVFTGGTAVHVRAPSNGKIKFNEDLVHPTRTRHGHPAFLCYIDLAVTIESEDIIHNVNIPPKSFLLVQKDQYVESEQVIAEIRAGTSTLNFKEKVRKHIYSDSQGEMHWSTDVDHAPEFTYGNVHLLPKTSHLWILAGRPHKSRVATRSLHKDQDQTNAHFLSVEQRYISNSSVINAYMRHTFFSSDLSSTNSNKGDSISDYSERKRIVRTRHSNLIYPAKNSYLLGKRRRNRFMTTFQSIQELEKELRAPSGISIDIPLNGSFRRNSILAYFDDPRYRRESAGITKYGTIEAHSIKKKEGLIEYRGVNEFRAKYQMQVDRFFFIPEEVHILPRSSAIMVRNNSIIGVDTQITLTTRSRVGGLVRVEKKKKKIGLKIFSGNIHFPGKTDKISRHRGILIPPGRGQTKLKNWSYVQRITPTKKRYFVLIRPAITYEITDGISLSTLFPQDLLQERDKVQLRVVNYILSGNGKPIRGISDTSIQLVRTCLVLNWDHDKKSSSIEESRASFVEVKTNDMMRDFLRIDLVKSTISYAGKRNDPSGSGLLSDNESDRMNPFYSIYIYSKARLQQPFSQNNETVRTLLNRTKEFQSFIILSSANCFRMGPFKGLKYYKELDPIIPIKNSSGPFGTSLQIANFYSFYRLITQDKILVTNYLQLDNLKQTFWVMKYYFIDDNRKIYNPDPVSNIVLNSFKLNWYCLHHNYYEETSARMGLGQFLCENVCLAKNGPRLKAGQVLIVQVDSVVIRAAKPYLATPGATVHGHYGEIIYEGDTLVTFIYEKSRSGDITQGLPKVEQVLEVRSLESISMNLERRIDAWNERITGILGLPWGFVVGAELTIVQSRISLVNKIQKVYRSQGVQIHNRHLEIIVHQITSKVLVSEDGMSNVFLPGELIGLLRAERTGRALEEVISYRAVLVGITRASLNTHSFISEASFQETARVLAKAALRGRIDWLKGLKENVVLGGKIPVGTGFKGLVHPSSQHKSIPLKNKKKNLFEGEINDILFYYREFFNIEFLCFKNYQ.

The Zn(2+) site is built by C224, C295, C302, and C305.

It belongs to the RNA polymerase beta' chain family. RpoC2 subfamily. In terms of assembly, in plastids the minimal PEP RNA polymerase catalytic core is composed of four subunits: alpha, beta, beta', and beta''. When a (nuclear-encoded) sigma factor is associated with the core the holoenzyme is formed, which can initiate transcription. The cofactor is Zn(2+).

It is found in the plastid. It localises to the chloroplast. The catalysed reaction is RNA(n) + a ribonucleoside 5'-triphosphate = RNA(n+1) + diphosphate. DNA-dependent RNA polymerase catalyzes the transcription of DNA into RNA using the four ribonucleoside triphosphates as substrates. The polypeptide is DNA-directed RNA polymerase subunit beta'' (Fagopyrum esculentum subsp. ancestrale (Wild buckwheat)).